Here is a 411-residue protein sequence, read N- to C-terminus: Potassium channel subfamily K member 3 (411 aa).

Topologically, residues 1 to 8 (MKRQNVRT) are cytoplasmic. The helical transmembrane segment at 9 to 29 (LALIVCTFTYLLVGAAVFDAL) threads the bilayer. Asn-53 carries N-linked (GlcNAc...) asparagine glycosylation. Residues 78 to 101 (WRFAGSFYFAITVITTIGYGHAAP) constitute an intramembrane region (pore-forming). Residues 108 to 128 (VFCMFYALLGIPLTLVMFQSL) traverse the membrane as a helical segment. Topologically, residues 129–158 (GERINTFVRYLLHRAKRGLGMRHAEVSMAN) are cytoplasmic. The helical transmembrane segment at 159-179 (MVLIGFVSCISTLCIGAAAFS) threads the bilayer. The pore-forming intramembrane region spans 184-207 (WTFFQAYYYCFITLTTIGFGDYVA). A helical membrane pass occupies residues 223–243 (FSFVYILTGLTVIGAFLNLVV). Over 244–411 (LRFMTMNAED…RGLMKRRSSV (168 aa)) the chain is Cytoplasmic.

This sequence belongs to the two pore domain potassium channel (TC 1.A.1.8) family. In terms of assembly, homodimer. Heterodimer with KCNK1. Heterodimer with KCNK9. In terms of tissue distribution, strongest expression in heart. Moderate expression in lung and brain. Low levels in liver, kidney and skeletal muscle. Expressed in cerebellar granule cells (at protein level).

The protein localises to the cell membrane. It carries out the reaction K(+)(in) = K(+)(out). It catalyses the reaction Na(+)(in) = Na(+)(out). With respect to regulation, inhibited by extracellular acidification, muscarinic signaling, divalent metal cations Zn(2+) and Ba(2+), isoflurane, bupivacaine and phenytoin. Activated by protein kinase A. Ruthenium red resistant. Functionally, k(+) channel that conducts voltage-dependent outward rectifying currents upon membrane depolarization. Voltage sensing is coupled to K(+) electrochemical gradient in an 'ion flux gating' mode where outward but not inward ion flow opens the gate. Changes ion selectivity and becomes permeable to Na(+) ions in response to extracellular acidification. Protonation of the pH sensor His-98 stabilizes C-type inactivation conformation likely converting the channel from outward K(+)-conducting, to inward Na(+)-conducting to nonconductive state. Homo- and heterodimerizes to form functional channels with distinct regulatory and gating properties. Allows K(+) currents with fast-gating kinetics important for the repolarization and hyperpolarization phases of action potentials. In cerebellar granule cells, heteromeric KCNK3:KCNK9 channel may hyperpolarize the resting membrane potential to limit intrinsic neuronal excitability, but once the action potential threshold is reached, it may support high-frequency action potential firing and increased neuronal excitability. Dispensable for central chemosensory respiration i.e. breathing controlled by brainstem CO2/pH, it rather conducts pH-sensitive currents and controls the firing rate of serotonergic raphe neurons involved in potentiation of the respiratory chemoreflex. Additionally, imparts chemosensitivity to type 1 cells in carotid bodies which respond to a decrease in arterial oxygen pressure or an increase in carbon dioxide pressure or pH to initiate adaptive changes in pulmonary ventilation. In adrenal gland, contributes to the maintenance of a hyperpolarized resting membrane potential of aldosterone-producing cells at zona glomerulosa and limits aldosterone release as part of a regulatory mechanism that controls arterial blood pressure and electrolyte homeostasis. In brown adipocytes, mediates K(+) efflux that counteracts norepinephrine-induced membrane depolarization, limits Ca(2+) efflux and downstream cAMP and PKA signaling, ultimately attenuating lipid oxidation and adaptive thermogenesis. This Rattus norvegicus (Rat) protein is Potassium channel subfamily K member 3.